Here is a 141-residue protein sequence, read N- to C-terminus: Hemoglobin subunit alpha-A (141 aa).

In terms of domain architecture, Globin spans valine 1 to arginine 141. Histidine 58 contributes to the O2 binding site. Histidine 87 is a binding site for heme b.

The protein belongs to the globin family. As to quaternary structure, heterotetramer of two alpha chains and two beta chains. In terms of tissue distribution, red blood cells.

In terms of biological role, involved in oxygen transport from the lung to the various peripheral tissues. This is Hemoglobin subunit alpha-A (HBAA) from Eudynamys scolopaceus (Western koel).